Reading from the N-terminus, the 92-residue chain is Defensin-like protein 249 (92 aa).

An N-terminal signal peptide occupies residues 1 to 24 (MKLAAIFLASSVLLSLLPIHLSQG). Intrachain disulfides connect Cys-34–Cys-91, Cys-45–Cys-74, Cys-53–Cys-84, and Cys-72–Cys-86.

It belongs to the DEFL family.

Its subcellular location is the secreted. The sequence is that of Defensin-like protein 249 (SCRL7) from Arabidopsis thaliana (Mouse-ear cress).